The chain runs to 545 residues: Chaperonin GroEL 5 (545 aa).

Residues T30 to P33, K51, D87 to T91, G415, and D495 each bind ATP.

Belongs to the chaperonin (HSP60) family. As to quaternary structure, forms a cylinder of 14 subunits composed of two heptameric rings stacked back-to-back. Interacts with the co-chaperonin GroES.

It is found in the cytoplasm. The enzyme catalyses ATP + H2O + a folded polypeptide = ADP + phosphate + an unfolded polypeptide.. Together with its co-chaperonin GroES, plays an essential role in assisting protein folding. The GroEL-GroES system forms a nano-cage that allows encapsulation of the non-native substrate proteins and provides a physical environment optimized to promote and accelerate protein folding. The polypeptide is Chaperonin GroEL 5 (Sinorhizobium medicae (strain WSM419) (Ensifer medicae)).